The following is an 859-amino-acid chain: Low-density lipoprotein receptor-related protein 12 (859 aa).

Positions 1-32 are cleaved as a signal peptide; it reads MARRWSTKESPRWRSALLLLFLAGVYGNGALA. The Extracellular segment spans residues 33-492; sequence EHSENVHISG…ENCPVIVPTR (460 aa). 2 disulfides stabilise this stretch: Cys-47/Cys-76 and Cys-103/Cys-122. The 113-residue stretch at 47–159 folds into the CUB 1 domain; it reads CGETPEQIRA…KGFRLAYFSG (113 aa). Residue Asn-75 is glycosylated (N-linked (GlcNAc...) asparagine). Asn-146 carries an N-linked (GlcNAc...) asparagine glycan. 2 consecutive LDL-receptor class A domains span residues 165-201 and 214-255; these read NCAC…EICA and PCAY…IDCD. Intrachain disulfides connect Cys-166-Cys-178, Cys-173-Cys-191, Cys-185-Cys-200, Cys-215-Cys-232, Cys-222-Cys-245, Cys-239-Cys-254, and Cys-259-Cys-285. The CUB 2 domain occupies 259–372; the sequence is CGQWLKYFYG…RGFNATYQVD (114 aa). Residues Asn-284 and Asn-366 are each glycosylated (N-linked (GlcNAc...) asparagine). LDL-receptor class A domains are found at residues 374–411, 412–449, and 450–486; these read FCLP…INCT, MCQK…KNCF, and FCQP…ENCP. Disulfide bonds link Cys-375/Cys-388, Cys-382/Cys-401, Cys-395/Cys-410, Cys-413/Cys-426, Cys-420/Cys-439, Cys-433/Cys-448, Cys-451/Cys-463, Cys-458/Cys-476, and Cys-470/Cys-485. Asn-409 carries N-linked (GlcNAc...) asparagine glycosylation. Asn-441 carries an N-linked (GlcNAc...) asparagine glycan. A helical membrane pass occupies residues 493-513; that stretch reads VITAAVIGSLICGLLLVIALG. At 514–859 the chain is on the cytoplasmic side; sequence CTCKLYSLRM…TSDDEALLLC (346 aa). Disordered stretches follow at residues 623–678, 693–723, 748–770, and 802–823; these read ADGD…LPQK, ASSS…SPAR, SSVS…REDD, and QGQG…SNRD. Composition is skewed to polar residues over residues 748–757 and 802–814; these read SSVSQNQSPL and QGQG…NATN.

The protein belongs to the LDLR family. May interact with RACK1, ZFYVE9 and NMRK2.

Its subcellular location is the membrane. It is found in the coated pit. Probable receptor, which may be involved in the internalization of lipophilic molecules and/or signal transduction. May act as a tumor suppressor. The polypeptide is Low-density lipoprotein receptor-related protein 12 (LRP12) (Pongo abelii (Sumatran orangutan)).